A 425-amino-acid chain; its full sequence is MGVSRVLHVEGGTPLKGELRVYPAKNAALPILAASLLTPEPITLVEVPRLRDVEVMLELLAHLGTQYAWEGRTLHLQTPEIKSTHAPYELVGQMRASFIVWGALLARAGEGHVSMPGGCAFGFRPVDQHIKALEALGAEVWEEDGTFHARRTRPLSGRVVFDLPTVGGTEQAMLAVALGGEATLVQAAVEPEVVDLGHFLALLGAEVEGLGSPIVRIKGAPRLKGGTYRIIPDRIEAGTYLLAAAATRGSLTLEGVRPDHLDALLDKLWRSGHRLEVGEDWIRFRATPDPAPFHVEAREYPGFPTDLQPIATAYLATVPGQSTVVDRIYPDRFTHVGELARMGAELYLRDRILTVQGRRLHGAQVKALDIRAGGALVVAALSAEGASEIEGVYFLERGYEHLTERLQALGARVHLRESPVALAAD.

Residue 25–26 coordinates phosphoenolpyruvate; the sequence is KN. Arg95 is a UDP-N-acetyl-alpha-D-glucosamine binding site. The active-site Proton donor is Cys119. At Cys119 the chain carries 2-(S-cysteinyl)pyruvic acid O-phosphothioketal. Residues 124-128, Asp306, and Ile328 contribute to the UDP-N-acetyl-alpha-D-glucosamine site; that span reads RPVDQ.

The protein belongs to the EPSP synthase family. MurA subfamily.

Its subcellular location is the cytoplasm. It catalyses the reaction phosphoenolpyruvate + UDP-N-acetyl-alpha-D-glucosamine = UDP-N-acetyl-3-O-(1-carboxyvinyl)-alpha-D-glucosamine + phosphate. The protein operates within cell wall biogenesis; peptidoglycan biosynthesis. In terms of biological role, cell wall formation. Adds enolpyruvyl to UDP-N-acetylglucosamine. This Thermus thermophilus (strain ATCC 27634 / DSM 579 / HB8) protein is UDP-N-acetylglucosamine 1-carboxyvinyltransferase.